A 580-amino-acid polypeptide reads, in one-letter code: Isochorismate synthase, chloroplastic (580 aa).

The N-terminal 91 residues, 1-91, are a transit peptide targeting the chloroplast; it reads MASITGHCVA…LAMERLSSAV (91 aa).

The protein belongs to the isochorismate synthase family. The cofactor is Mg(2+).

The protein resides in the plastid. The protein localises to the chloroplast. The catalysed reaction is chorismate = isochorismate. Not inhibited by Tyr, Phe or Trp. Involved in the synthesis of o-succinylbenzoic acid, 2,3-dihydroxybenzoic acid and salicylic acid (SA). The polypeptide is Isochorismate synthase, chloroplastic (Catharanthus roseus (Madagascar periwinkle)).